The chain runs to 472 residues: Uronate isomerase (472 aa).

It belongs to the metallo-dependent hydrolases superfamily. Uronate isomerase family.

It catalyses the reaction D-glucuronate = D-fructuronate. The catalysed reaction is aldehydo-D-galacturonate = keto-D-tagaturonate. It functions in the pathway carbohydrate metabolism; pentose and glucuronate interconversion. The protein is Uronate isomerase of Shouchella clausii (strain KSM-K16) (Alkalihalobacillus clausii).